A 316-amino-acid chain; its full sequence is MNVQIGIDLMGGDHSPLVIWEVLIDVLNSRASNSHISFIAFASREVKEQILSSYTHKEYPEIIASESFVAMDDSPLAAIRKKSSSMALGLDYLKEDKIDAFISTGNTAALITLSRAKIPVFPTVRRPALLVRVPTMRGCAVILDVGANVSVNPEEMLGFARMGLAYRQCLGKAECPTIGLLNIGSEERKGTEAHRQTYRILKETFQDAFLGNIESGDVFGGSVDIVVADGFTGNIFLKTAEGVFDFLRHILGDKLESDVTRHLDYTIYPGSMVCGLSKLVIKCHGKACGKSLFNGISGSIDLARARVCERILSSLS.

This sequence belongs to the PlsX family. Homodimer. Probably interacts with PlsY.

It localises to the cytoplasm. It carries out the reaction a fatty acyl-[ACP] + phosphate = an acyl phosphate + holo-[ACP]. The protein operates within lipid metabolism; phospholipid metabolism. In terms of biological role, catalyzes the reversible formation of acyl-phosphate (acyl-PO(4)) from acyl-[acyl-carrier-protein] (acyl-ACP). This enzyme utilizes acyl-ACP as fatty acyl donor, but not acyl-CoA. This chain is Phosphate acyltransferase, found in Chlamydia caviae (strain ATCC VR-813 / DSM 19441 / 03DC25 / GPIC) (Chlamydophila caviae).